A 1003-amino-acid chain; its full sequence is Cation-transporting ATPase HMA5 (1003 aa).

The tract at residues 6–25 is disordered; that stretch reads LSAVAGGGRPAAAGGGGDEM. Positions 10-22 are enriched in gly residues; the sequence is AGGGRPAAAGGGG. 3 consecutive HMA domains span residues 51–117, 133–199, and 207–273; these read EEAH…FDAE, LSAQ…FEAA, and DKIL…NGRL. Cu cation contacts are provided by Cys62, Cys65, Cys144, and Cys147. Transmembrane regions (helical) follow at residues 302 to 322, 331 to 351, 372 to 392, 396 to 416, 562 to 582, 599 to 619, 938 to 958, and 966 to 986; these read SLFL…IPFI, GPFH…QFVV, VLVV…LLYG, GFHP…VLFG, IFVP…FLCG, FVFS…CALG, FFAM…LFPF, and WLAG…SLLL.

The protein belongs to the cation transport ATPase (P-type) (TC 3.A.3) family. Type IB subfamily. In terms of tissue distribution, expressed in root vascular cylinder, vascular bundles and mesophyll cells of leaf blades, and anther walls and microspores of stamens.

It localises to the cell membrane. Metal efflux transporter that may play a role in detoxification of heavy metals, such as zinc, copper, lead and cadmium, especially in the shoots. The chain is Cation-transporting ATPase HMA5 from Oryza sativa subsp. japonica (Rice).